A 234-amino-acid polypeptide reads, in one-letter code: Phosphoglycolate phosphatase (234 aa).

Asp8 functions as the Nucleophile in the catalytic mechanism. Positions 8 and 10 each coordinate Mg(2+). Substrate is bound at residue Lys157. Mg(2+) contacts are provided by Asp180 and Asp184.

The protein belongs to the archaeal SPP-like hydrolase family. The cofactor is Mg(2+).

It carries out the reaction 2-phosphoglycolate + H2O = glycolate + phosphate. Functionally, catalyzes the dephosphorylation of 2-phosphoglycolate. This chain is Phosphoglycolate phosphatase, found in Methanoculleus marisnigri (strain ATCC 35101 / DSM 1498 / JR1).